Here is a 155-residue protein sequence, read N- to C-terminus: Putative pre-16S rRNA nuclease (155 aa).

It belongs to the YqgF nuclease family.

The protein resides in the cytoplasm. Could be a nuclease involved in processing of the 5'-end of pre-16S rRNA. The polypeptide is Putative pre-16S rRNA nuclease (Xanthomonas campestris pv. campestris (strain 8004)).